Here is a 167-residue protein sequence, read N- to C-terminus: MLPMITEFINYGQQTIRAARYIGQGFMITLSHANRLPVTIQYPYEKLITSERFRGRIHFEFDKCIACEVCVRVCPIDLPVVDWKLETDIRKKRLLNYSIDFGICIFCGNCVEYCPTNCLSMTEEYELSTYDRHELNYNQIALGRLPMSVIDDYTIRTISNLPQIKNE.

2 consecutive 4Fe-4S ferredoxin-type domains span residues 55–84 (GRIH…VDWK) and 95–124 (LNYS…MTEE). Cys-64, Cys-67, Cys-70, Cys-74, Cys-104, Cys-107, Cys-110, and Cys-114 together coordinate [4Fe-4S] cluster.

Belongs to the complex I 23 kDa subunit family. As to quaternary structure, NDH is composed of at least 16 different subunits, 5 of which are encoded in the nucleus. It depends on [4Fe-4S] cluster as a cofactor.

The protein localises to the plastid. It localises to the chloroplast thylakoid membrane. The catalysed reaction is a plastoquinone + NADH + (n+1) H(+)(in) = a plastoquinol + NAD(+) + n H(+)(out). It catalyses the reaction a plastoquinone + NADPH + (n+1) H(+)(in) = a plastoquinol + NADP(+) + n H(+)(out). In terms of biological role, NDH shuttles electrons from NAD(P)H:plastoquinone, via FMN and iron-sulfur (Fe-S) centers, to quinones in the photosynthetic chain and possibly in a chloroplast respiratory chain. The immediate electron acceptor for the enzyme in this species is believed to be plastoquinone. Couples the redox reaction to proton translocation, and thus conserves the redox energy in a proton gradient. In Atropa belladonna (Belladonna), this protein is NAD(P)H-quinone oxidoreductase subunit I, chloroplastic.